The sequence spans 556 residues: Putative protein SPATA31F2P (556 aa).

Disordered stretches follow at residues 133–154 and 210–231; these read ALKA…SGSD and LPKT…WVSP. Positions 144-154 are enriched in polar residues; that stretch reads SGGQDNDSGSD.

Belongs to the SPATA31 family.

This is Putative protein SPATA31F2P from Homo sapiens (Human).